We begin with the raw amino-acid sequence, 448 residues long: Glutamyl-tRNA reductase (448 aa).

Substrate contacts are provided by residues 49–52 (TCNR), serine 109, 114–116 (ETQ), and glutamine 120. Cysteine 50 acts as the Nucleophile in catalysis. Position 189 to 194 (189 to 194 (GAGEMG)) interacts with NADP(+).

It belongs to the glutamyl-tRNA reductase family. Homodimer.

It catalyses the reaction (S)-4-amino-5-oxopentanoate + tRNA(Glu) + NADP(+) = L-glutamyl-tRNA(Glu) + NADPH + H(+). Its pathway is porphyrin-containing compound metabolism; protoporphyrin-IX biosynthesis; 5-aminolevulinate from L-glutamyl-tRNA(Glu): step 1/2. Its function is as follows. Catalyzes the NADPH-dependent reduction of glutamyl-tRNA(Glu) to glutamate 1-semialdehyde (GSA). This is Glutamyl-tRNA reductase from Staphylococcus epidermidis (strain ATCC 35984 / DSM 28319 / BCRC 17069 / CCUG 31568 / BM 3577 / RP62A).